The sequence spans 304 residues: GDP-6-deoxy-D-mannose reductase (304 aa).

NADP(+) is bound by residues 13 to 14 (FV) and 39 to 40 (DL). 105–106 (SG) contacts substrate. Y131 contacts NADP(+). Substrate is bound by residues N160, R200, and 260–263 (RRAE).

The protein belongs to the NAD(P)-dependent epimerase/dehydratase family. GDP-6-deoxy-D-mannose reductase subfamily.

It carries out the reaction GDP-alpha-D-rhamnose + NAD(+) = GDP-4-dehydro-alpha-D-rhamnose + NADH + H(+). The enzyme catalyses GDP-alpha-D-rhamnose + NADP(+) = GDP-4-dehydro-alpha-D-rhamnose + NADPH + H(+). Functionally, reductase that catalyzes the conversion of GDP-6-deoxy-D-mannose to GDP-4-dehydro-6-deoxy-D-mannose (GDP-D-rhamnose). The chain is GDP-6-deoxy-D-mannose reductase (rmd) from Pseudomonas aeruginosa (strain ATCC 15692 / DSM 22644 / CIP 104116 / JCM 14847 / LMG 12228 / 1C / PRS 101 / PAO1).